We begin with the raw amino-acid sequence, 235 residues long: Glycerol uptake facilitator protein 2 (235 aa).

The next 6 helical transmembrane spans lie at 4-24 (FLGE…SGAA), 39-59 (FICL…GQFG), 62-82 (GHLN…PMAN), 83-103 (VWPY…IVII), 134-154 (VFNF…LLNL), and 165-185 (MVGL…GFAI). The NPA 1 signature appears at 65–67 (NPA). An NPA 2 motif is present at residues 186–188 (NPA). A helical transmembrane segment spans residues 210–230 (WGYAWVPMFGPLLGGILAAGL).

The protein belongs to the MIP/aquaporin (TC 1.A.8) family.

The protein localises to the cell membrane. Its function is as follows. Transporter that facilitates the transmembrane diffusion of water, dihydroxyacetone, glycerol and H(2)O(2). Is not permeable to urea and D/L-lactic acid. The polypeptide is Glycerol uptake facilitator protein 2 (Lactiplantibacillus plantarum (strain ATCC BAA-793 / NCIMB 8826 / WCFS1) (Lactobacillus plantarum)).